The primary structure comprises 308 residues: tRNA dimethylallyltransferase (308 aa).

ATP is bound at residue 10 to 17 (GPTASGKT). 12-17 (TASGKT) contacts substrate. Interaction with substrate tRNA regions lie at residues 35 to 38 (DSSL) and 159 to 163 (QRIFR).

Belongs to the IPP transferase family. Monomer. Mg(2+) serves as cofactor.

It catalyses the reaction adenosine(37) in tRNA + dimethylallyl diphosphate = N(6)-dimethylallyladenosine(37) in tRNA + diphosphate. Catalyzes the transfer of a dimethylallyl group onto the adenine at position 37 in tRNAs that read codons beginning with uridine, leading to the formation of N6-(dimethylallyl)adenosine (i(6)A). This Francisella tularensis subsp. novicida (strain U112) protein is tRNA dimethylallyltransferase.